The sequence spans 157 residues: Cyclic pyranopterin monophosphate synthase (157 aa).

Substrate is bound by residues 74–76 (MCH) and 110–111 (ME). Asp125 is an active-site residue.

The protein belongs to the MoaC family. As to quaternary structure, homohexamer; trimer of dimers.

It catalyses the reaction (8S)-3',8-cyclo-7,8-dihydroguanosine 5'-triphosphate = cyclic pyranopterin phosphate + diphosphate. It functions in the pathway cofactor biosynthesis; molybdopterin biosynthesis. In terms of biological role, catalyzes the conversion of (8S)-3',8-cyclo-7,8-dihydroguanosine 5'-triphosphate to cyclic pyranopterin monophosphate (cPMP). This chain is Cyclic pyranopterin monophosphate synthase, found in Peptoclostridium acidaminophilum (Eubacterium acidaminophilum).